Consider the following 258-residue polypeptide: Rho-related GTP-binding protein RhoU (258 aa).

The segment at 1–45 (MPPQQGDPAFPDRCEAPPVPPRRERGGRGGRGPGEPGGRGRAGGA) is disordered. The segment covering 10 to 27 (FPDRCEAPPVPPRRERGG) has biased composition (basic and acidic residues). Positions 29–45 (GGRGPGEPGGRGRAGGA) are enriched in gly residues. Residues 56–63 (GDGAVGKT), 103–107 (DTAGQ), and 161–164 (TQSD) contribute to the GTP site. Glycyl lysine isopeptide (Lys-Gly) (interchain with G-Cter in ubiquitin) cross-links involve residues Lys177 and Lys248. Cys256 carries S-palmitoyl cysteine lipidation.

It belongs to the small GTPase superfamily. Rho family. As to quaternary structure, interacts with PAK1. Interacts with PAK3. Interacts with ARHGAP30 in a GTP-independent manner. In its GTP-loaded conformation, interacts with ARHGAP31. Interacts with PTK2B/PYK2. Interacts with PAK4; the interaction is PAK4 kinase activity-independent and protects RHOU from ubiquitination. Mg(2+) serves as cofactor. Ubiquitinated. 'Lys-48'-linked ubiquitination at Lys-177 and Lys-248 by the ECS(RAB40A) complex leading to its degradation. In terms of processing, tyrosine phosphorylated by SRC in response to PTK2B/PYK2 activation. As to expression, ubiquitously expressed in all tissues examined. Expressed at high levels in the stomach, small intestine, brain, skeletal muscle and placenta.

Its subcellular location is the cell membrane. It is found in the golgi apparatus membrane. The protein resides in the cell junction. It localises to the focal adhesion. The protein localises to the cell projection. Its subcellular location is the podosome. Its function is as follows. Binds to and activates protein kinase PAK1. Plays a role in the regulation of cell morphology, cytoskeletal organization and focal adhesion assembly during cell migration. Also stimulates quiescent cells to reenter the cell cycle. Has no detectable GTPase activity but its high intrinsic guanine nucleotide exchange activity suggests it is constitutively GTP-bound. This Homo sapiens (Human) protein is Rho-related GTP-binding protein RhoU.